A 159-amino-acid polypeptide reads, in one-letter code: Ubiquitin-conjugating enzyme E2 variant 1B (159 aa).

The 149-residue stretch at 11–159 (PRNFRLLEEL…KGLVVKCCVM (149 aa)) folds into the UBC core domain.

Belongs to the ubiquitin-conjugating enzyme family. In terms of assembly, heterodimer with UBC35 or UBC36. Expressed in roots, shoots, leaves, stems and flowers, but not in pollen.

Its function is as follows. Has no ubiquitin ligase activity on its own. The heterodimer with UBC catalyzes the synthesis of non-canonical poly-ubiquitin chains that are linked through 'Lys-63'. This type of poly-ubiquitination does not lead to protein degradation by the proteasome. Mediates transcriptional activation of target genes. May play a role in the control of progress through the cell cycle and differentiation. May play a role in the error-free DNA repair pathway and contributes to the survival of cells after DNA damage. The chain is Ubiquitin-conjugating enzyme E2 variant 1B (UEV1B) from Arabidopsis thaliana (Mouse-ear cress).